A 165-amino-acid chain; its full sequence is Serine/threonine-protein phosphatase 2A 56 kDa regulatory subunit epsilon isoform (165 aa).

Positions 1 to 41 are disordered; that stretch reads MSSAPTTPPSVDKVDGFSRKSVRKARQKRSQSSSQFRSQGK. S2 is modified (N-acetylserine). Phosphothreonine is present on T7. The span at 20-29 shows a compositional bias: basic residues; the sequence is KSVRKARQKR. Phosphoserine is present on residues S30, S32, and S34. Positions 30 to 41 are enriched in low complexity; the sequence is SQSSSQFRSQGK.

The protein belongs to the phosphatase 2A regulatory subunit B56 family. PP2A consists of a common heterodimeric core enzyme, composed of a 36 kDa catalytic subunit (subunit C) and a 65 kDa constant regulatory subunit (PR65 or subunit A), that associates with a variety of regulatory subunits. Proteins that associate with the core dimer include three families of regulatory subunits B (the R2/B/PR55/B55, R3/B''/PR72/PR130/PR59 and R5/B'/B56 families), the 48 kDa variable regulatory subunit, viral proteins, and cell signaling molecules. Interacts with SGO1. Found in a complex with at least ARL2, PPP2CB; PPP2R1A, PPP2R2A, PPP2R5E and TBCD. Highly expressed in testis, lung and brain.

It is found in the cytoplasm. The B regulatory subunit might modulate substrate selectivity and catalytic activity, and might also direct the localization of the catalytic enzyme to a particular subcellular compartment. The protein is Serine/threonine-protein phosphatase 2A 56 kDa regulatory subunit epsilon isoform (PPP2R5E) of Oryctolagus cuniculus (Rabbit).